The primary structure comprises 624 residues: Probable Xaa-Pro aminopeptidase P (624 aa).

4 residues coordinate Mn(2+): D421, D432, E530, and E544.

It belongs to the peptidase M24B family. Mn(2+) is required as a cofactor.

It carries out the reaction Release of any N-terminal amino acid, including proline, that is linked to proline, even from a dipeptide or tripeptide.. Functionally, catalyzes the removal of a penultimate prolyl residue from the N-termini of peptides. In Arthroderma otae (strain ATCC MYA-4605 / CBS 113480) (Microsporum canis), this protein is Probable Xaa-Pro aminopeptidase P (AMPP).